We begin with the raw amino-acid sequence, 375 residues long: Peritrophin-48 (375 aa).

An N-terminal signal peptide occupies residues 1–20 (MIIKTLLASVAIMLIATVNA). Chitin-binding type-2 domains follow at residues 25 to 83 (AKYC…NCIL), 86 to 143 (DNPC…SDDD), 153 to 210 (LNIC…MCER), 224 to 292 (ETLC…GCNR), and 294 to 360 (EYTT…ACQN). Cysteines 60 and 73 form a disulfide. N-linked (GlcNAc...) asparagine glycosylation occurs at asparagine 117. 4 disulfide bridges follow: cysteine 120/cysteine 133, cysteine 187/cysteine 200, cysteine 265/cysteine 278, and cysteine 330/cysteine 343. An N-linked (GlcNAc...) asparagine glycan is attached at asparagine 360.

Glycosylated. As to expression, cardia and midgut peritrophic membrane.

Functionally, may bind chitin or related oligosaccharide structures. This is Peritrophin-48 from Lucilia cuprina (Green bottle fly).